We begin with the raw amino-acid sequence, 214 residues long: Adenylate kinase (214 aa).

10-15 (GAGKGT) contacts ATP. The NMP stretch occupies residues 30–59 (STGDLLREEIANNTELGKQAKKLIDGGNLV). AMP is bound by residues T31, R36, 57-59 (NLV), 83-86 (GFPR), and Q90. Positions 124–161 (LRRQCKNCGNIFNLRFIKNFDGKCPKCGSTDIYQRADD) are LID. Residue R125 participates in ATP binding. C128 and C131 together coordinate Zn(2+). Residue 134–135 (IF) participates in ATP binding. C147 and C150 together coordinate Zn(2+). Positions 158 and 169 each coordinate AMP. Residue K197 coordinates ATP.

Belongs to the adenylate kinase family. Monomer.

It localises to the cytoplasm. The catalysed reaction is AMP + ATP = 2 ADP. Its pathway is purine metabolism; AMP biosynthesis via salvage pathway; AMP from ADP: step 1/1. Its function is as follows. Catalyzes the reversible transfer of the terminal phosphate group between ATP and AMP. Plays an important role in cellular energy homeostasis and in adenine nucleotide metabolism. The sequence is that of Adenylate kinase from Elusimicrobium minutum (strain Pei191).